A 575-amino-acid chain; its full sequence is Probable cytochrome P450 514A1 (575 aa).

A helical membrane pass occupies residues 4-24 (IFTIILTITILVLSLILKDLL). A heme-binding site is contributed by cysteine 448.

It belongs to the cytochrome P450 family. Heme serves as cofactor.

Its subcellular location is the membrane. The sequence is that of Probable cytochrome P450 514A1 (cyp514A1) from Dictyostelium discoideum (Social amoeba).